The chain runs to 246 residues: Nodulin-25 (246 aa).

The N-terminal stretch at 1–24 (MVYSNTYMLLGLGVFVLLSSHVLA) is a signal peptide.

It is found in the symbiosome. Its subcellular location is the peribacteroid space. In terms of biological role, involved in the development and function of nodules. It might participate in the biological process of symbiotic nitrogen fixation. The chain is Nodulin-25 (NMS-25) from Medicago sativa (Alfalfa).